The sequence spans 367 residues: Mitogen-activated protein kinase 12 (367 aa).

The 285-residue stretch at 27 to 311 folds into the Protein kinase domain; it reads YQDLQPVGSG…AAEALAHPYF (285 aa). ATP contacts are provided by residues 33 to 41 and Lys-56; that span reads VGSGAYGAV. The active-site Proton acceptor is Asp-153. The residue at position 183 (Thr-183) is a Phosphothreonine; by MAP2K3 and MAP2K6. The short motif at 183 to 185 is the TXY element; the sequence is TGY. A Phosphotyrosine; by MAP2K3 and MAP2K6 modification is found at Tyr-185.

This sequence belongs to the protein kinase superfamily. CMGC Ser/Thr protein kinase family. MAP kinase subfamily. As to quaternary structure, monomer. Interacts with the PDZ domain of the syntrophin SNTA1. Interacts with LIN7C, SCRIB, SYNJ2BP and SH3BP5. Interacts with PTPN4; this interaction induces the activation of PTPN4 phosphatase activity. Mg(2+) is required as a cofactor. Dually phosphorylated on Thr-183 and Tyr-185 by MAP2K3/MKK3 and MAP2K6/MKK6, which activates the enzyme. In terms of processing, ubiquitinated. Ubiquitination leads to degradation by the proteasome pathway. In terms of tissue distribution, highly expressed in skeletal muscle, lung and testes and also in the heart and thymus of both adult and neonatal rats.

The protein localises to the cytoplasm. It is found in the nucleus. The protein resides in the mitochondrion. It carries out the reaction L-seryl-[protein] + ATP = O-phospho-L-seryl-[protein] + ADP + H(+). The enzyme catalyses L-threonyl-[protein] + ATP = O-phospho-L-threonyl-[protein] + ADP + H(+). Activated by phosphorylation on threonine and tyrosine. MAP2K3/MKK3 and MAP2K6/MKK6 are both essential for the activation of MAPK12 induced by environmental stress, whereas MAP2K6/MKK6 is the major MAPK12 activator in response to TNF-alpha. Serine/threonine kinase which acts as an essential component of the MAP kinase signal transduction pathway. MAPK12 is one of the four p38 MAPKs which play an important role in the cascades of cellular responses evoked by extracellular stimuli such as pro-inflammatory cytokines or physical stress leading to direct activation of transcription factors such as ELK1 and ATF2. Accordingly, p38 MAPKs phosphorylate a broad range of proteins and it has been estimated that they may have approximately 200 to 300 substrates each. Some of the targets are downstream kinases such as MAPKAPK2, which are activated through phosphorylation and further phosphorylate additional targets. Plays a role in myoblast differentiation and also in the down-regulation of cyclin D1 in response to hypoxia in adrenal cells suggesting MAPK12 may inhibit cell proliferation while promoting differentiation. Phosphorylates DLG1. Following osmotic shock, MAPK12 in the cell nucleus increases its association with nuclear DLG1, thereby causing dissociation of DLG1-SFPQ complexes. This function is independent of its catalytic activity and could affect mRNA processing and/or gene transcription to aid cell adaptation to osmolarity changes in the environment. Regulates UV-induced checkpoint signaling and repair of UV-induced DNA damage and G2 arrest after gamma-radiation exposure. MAPK12 is involved in the regulation of SLC2A1 expression and basal glucose uptake in L6 myotubes; and negatively regulates SLC2A4 expression and contraction-mediated glucose uptake in adult skeletal muscle. C-Jun (JUN) phosphorylation is stimulated by MAPK14 and inhibited by MAPK12, leading to a distinct AP-1 regulation. MAPK12 is required for the normal kinetochore localization of PLK1, prevents chromosomal instability and supports mitotic cell viability. MAPK12-signaling is also positively regulating the expansion of transient amplifying myogenic precursor cells during muscle growth and regeneration. This is Mitogen-activated protein kinase 12 (Mapk12) from Rattus norvegicus (Rat).